The following is a 197-amino-acid chain: MRVLGVDPGLTRCGLGVVDGALGSRARLVEAGVVRTPAGAEVADRLRAVADGIDAWLDRTRPDAVAVEKVFSQANVRTVMGTAQAGAVAIMLAARRDLPVGLYTPSEVKAAVTGSGRADKAQVGFMVTRLLGLAEVPRPADAADALALALCHLWRGPALARLRAAAPAAPVSRPAPATPARRSPRPAAPARRPAGAS.

Residues D7, E68, and D141 contribute to the active site. Mg(2+)-binding residues include D7, E68, and D141. Low complexity-rich tracts occupy residues 165–181 (AAPA…TPAR) and 188–197 (APARRPAGAS). Residues 165–197 (AAPAAPVSRPAPATPARRSPRPAAPARRPAGAS) form a disordered region.

The protein belongs to the RuvC family. As to quaternary structure, homodimer which binds Holliday junction (HJ) DNA. The HJ becomes 2-fold symmetrical on binding to RuvC with unstacked arms; it has a different conformation from HJ DNA in complex with RuvA. In the full resolvosome a probable DNA-RuvA(4)-RuvB(12)-RuvC(2) complex forms which resolves the HJ. It depends on Mg(2+) as a cofactor.

The protein resides in the cytoplasm. The catalysed reaction is Endonucleolytic cleavage at a junction such as a reciprocal single-stranded crossover between two homologous DNA duplexes (Holliday junction).. Functionally, the RuvA-RuvB-RuvC complex processes Holliday junction (HJ) DNA during genetic recombination and DNA repair. Endonuclease that resolves HJ intermediates. Cleaves cruciform DNA by making single-stranded nicks across the HJ at symmetrical positions within the homologous arms, yielding a 5'-phosphate and a 3'-hydroxyl group; requires a central core of homology in the junction. The consensus cleavage sequence is 5'-(A/T)TT(C/G)-3'. Cleavage occurs on the 3'-side of the TT dinucleotide at the point of strand exchange. HJ branch migration catalyzed by RuvA-RuvB allows RuvC to scan DNA until it finds its consensus sequence, where it cleaves and resolves the cruciform DNA. The sequence is that of Crossover junction endodeoxyribonuclease RuvC from Frankia alni (strain DSM 45986 / CECT 9034 / ACN14a).